Reading from the N-terminus, the 58-residue chain is Small ribosomal subunit protein bS21 (58 aa).

The disordered stretch occupies residues 28-58; that stretch reads VLQDIRKHEHYEKPSIKKKKKSEAARKKKRF. Over residues 31 to 42 the composition is skewed to basic and acidic residues; it reads DIRKHEHYEKPS. A compositionally biased stretch (basic residues) spans 43-58; that stretch reads IKKKKKSEAARKKKRF.

The protein belongs to the bacterial ribosomal protein bS21 family.

The chain is Small ribosomal subunit protein bS21 from Syntrophomonas wolfei subsp. wolfei (strain DSM 2245B / Goettingen).